Reading from the N-terminus, the 101-residue chain is Small ribosomal subunit protein uS14 (101 aa).

It belongs to the universal ribosomal protein uS14 family. As to quaternary structure, part of the 30S ribosomal subunit. Contacts proteins S3 and S10.

Functionally, binds 16S rRNA, required for the assembly of 30S particles and may also be responsible for determining the conformation of the 16S rRNA at the A site. The chain is Small ribosomal subunit protein uS14 from Neisseria gonorrhoeae (strain ATCC 700825 / FA 1090).